The following is a 420-amino-acid chain: Glutamate-1-semialdehyde 2,1-aminomutase (420 aa).

Position 259 is an N6-(pyridoxal phosphate)lysine (Lys259).

This sequence belongs to the class-III pyridoxal-phosphate-dependent aminotransferase family. HemL subfamily. As to quaternary structure, homodimer. Pyridoxal 5'-phosphate serves as cofactor.

It is found in the cytoplasm. It catalyses the reaction (S)-4-amino-5-oxopentanoate = 5-aminolevulinate. It participates in porphyrin-containing compound metabolism; protoporphyrin-IX biosynthesis; 5-aminolevulinate from L-glutamyl-tRNA(Glu): step 2/2. This Nautilia profundicola (strain ATCC BAA-1463 / DSM 18972 / AmH) protein is Glutamate-1-semialdehyde 2,1-aminomutase.